We begin with the raw amino-acid sequence, 65 residues long: Large ribosomal subunit protein uL30 (65 aa).

Belongs to the universal ribosomal protein uL30 family. As to quaternary structure, part of the 50S ribosomal subunit.

This chain is Large ribosomal subunit protein uL30, found in Desulfosudis oleivorans (strain DSM 6200 / JCM 39069 / Hxd3) (Desulfococcus oleovorans).